The sequence spans 2813 residues: von Willebrand factor (2813 aa).

An N-terminal signal peptide occupies residues 1 to 22 (MIPARFAGVLLALALILPGTLC). One can recognise a VWFD 1 domain in the interval 33–201 (ARCSLFGSDF…ALSSGEQWCE (169 aa)). 2 disulfides stabilise this stretch: cysteine 35–cysteine 162 and cysteine 57–cysteine 200. N-linked (GlcNAc...) asparagine glycans are attached at residues asparagine 99, asparagine 156, and asparagine 211. The region spanning 295-348 (CPAGMEYRQCVSPCARTCQSLHINEMCQERCVDGCSCPEGQLLDEGLCVESTEC) is the TIL 1 domain. Residues 386 to 560 (GECLVTGQSH…NAWKLHGDCQ (175 aa)) form the VWFD 2 domain. Intrachain disulfides connect cysteine 388–cysteine 524, cysteine 410–cysteine 559, and cysteine 432–cysteine 440. 2 consecutive TIL domains span residues 652–707 (CPKG…KAQC) and 776–827 (CPAD…LERC). The N-linked (GlcNAc...) asparagine glycan is linked to asparagine 666. The interval 764 to 787 (SLSCRPPMVKLVCPADNLRAEGLE) is amino-terminal. Cystine bridges form between cysteine 767/cysteine 808, cysteine 776/cysteine 804, and cysteine 810/cysteine 821. The segment at 788–833 (CTKTCQNYDLECMSMGCVSGCLCPPGMVRHENRCVALERCPCFHQG) is E1. The tract at residues 826–853 (RCPCFHQGKEYAPGETVKIGCNTCVCQD) is CX. A glycan (N-linked (GlcNAc...) asparagine) is linked at asparagine 857. In terms of domain architecture, VWFD 3 spans 865–1032 (ATCSTIGMAH…NSWKVSSQCA (168 aa)). 8 disulfide bridges follow: cysteine 867–cysteine 996, cysteine 889–cysteine 1031, cysteine 898–cysteine 993, cysteine 914–cysteine 921, cysteine 1060–cysteine 1084, cysteine 1071–cysteine 1111, cysteine 1089–cysteine 1091, and cysteine 1126–cysteine 1130. The region spanning 1146-1196 (YNSCAPACQVTCQHPEPLACPVQCVEGCHAHCPPGKILDELLQTCVDPEDC) is the TIL 4 domain. N-linked (GlcNAc...) asparagine; atypical glycosylation is present at asparagine 1147. 3 disulfides stabilise this stretch: cysteine 1149/cysteine 1169, cysteine 1153/cysteine 1165, and cysteine 1196/cysteine 1199. Residue asparagine 1231 is glycosylated (N-linked (GlcNAc...) asparagine). Residues cysteine 1234 and cysteine 1237 are joined by a disulfide bond. Threonine 1248, threonine 1255, and threonine 1256 each carry an O-linked (GalNAc...) threonine glycan. Residue serine 1263 is glycosylated (O-linked (GalNAc...) serine). Cysteine 1272 and cysteine 1458 are disulfide-bonded. Residues 1277–1453 (DLVFLLDGSS…DELEQQRDEI (177 aa)) form the VWFA 1; binding site for platelet glycoprotein Ib domain. O-linked (GalNAc...) threonine glycans are attached at residues threonine 1468 and threonine 1477. An O-linked (GalNAc...) serine glycan is attached at serine 1486. O-linked (GalNAc...) threonine glycosylation occurs at threonine 1487. The VWFA 2 domain maps to 1498 to 1665 (DVAFVLEGSD…TLPREAPDLV (168 aa)). Asparagine 1515 carries N-linked (GlcNAc...) (complex) asparagine glycosylation. Asparagine 1574 is a glycosylation site (N-linked (GlcNAc...) asparagine). Cysteine 1669 and cysteine 1670 are joined by a disulfide. An O-linked (GalNAc...) threonine glycan is attached at threonine 1679. Intrachain disulfides connect cysteine 1686–cysteine 1872, cysteine 1879–cysteine 1904, cysteine 1899–cysteine 1940, cysteine 1927–cysteine 2088, cysteine 1950–cysteine 2085, cysteine 1972–cysteine 2123, and cysteine 1993–cysteine 2001. In terms of domain architecture, VWFA 3; main binding site for collagens type I and III spans 1691–1871 (DVILLLDGSS…TLGNSFLHKL (181 aa)). The region spanning 1948 to 2124 (CVCTGSSTRH…TVQRPGQTCQ (177 aa)) is the VWFD 4 domain. The tract at residues 2216–2261 (CPRHCDGNVSSCGDHPSEGCFCPPDKVMLEGSCVPEEACTQCIGED) is E2. N-linked (GlcNAc...) asparagine glycosylation is found at asparagine 2223 and asparagine 2290. One can recognise a VWFC 1 domain in the interval 2255–2328 (TQCIGEDGVQ…CCPEYECVCD (74 aa)). Threonine 2298 carries O-linked (GalNAc...) threonine glycosylation. N-linked (GlcNAc...) asparagine glycosylation is found at asparagine 2357 and asparagine 2400. In terms of domain architecture, VWFC 2 spans 2429 to 2495 (KVCVHRSTIY…HEGECCGRCL (67 aa)). A Cell attachment site motif is present at residues 2507 to 2509 (RGD). 2 N-linked (GlcNAc...) asparagine glycosylation sites follow: asparagine 2546 and asparagine 2585. In terms of domain architecture, VWFC 3 spans 2580-2645 (EACMLNGTVI…NTGECCGRCL (66 aa)). Cystine bridges form between cysteine 2724/cysteine 2774, cysteine 2739/cysteine 2788, cysteine 2750/cysteine 2804, and cysteine 2754/cysteine 2806. One can recognise a CTCK domain in the interval 2724-2812 (CNDITARLQY…ECKCSPRKCS (89 aa)). Asparagine 2790 carries an N-linked (GlcNAc...) asparagine glycan.

As to quaternary structure, multimeric. Interacts with F8. All cysteine residues are involved in intrachain or interchain disulfide bonds. In terms of processing, N- and O-glycosylated. As to expression, plasma.

It localises to the secreted. The protein localises to the extracellular space. Its subcellular location is the extracellular matrix. Its function is as follows. Important in the maintenance of hemostasis, it promotes adhesion of platelets to the sites of vascular injury by forming a molecular bridge between sub-endothelial collagen matrix and platelet-surface receptor complex GPIb-IX-V. Also acts as a chaperone for coagulation factor VIII, delivering it to the site of injury, stabilizing its heterodimeric structure and protecting it from premature clearance from plasma. The protein is von Willebrand factor (VWF) of Homo sapiens (Human).